The chain runs to 348 residues: Aminotransferase atnJ (348 aa).

Residue Arg-79 participates in pyridoxal 5'-phosphate binding. Lys-180 carries the post-translational modification N6-(pyridoxal phosphate)lysine. Position 216 (Glu-216) interacts with pyridoxal 5'-phosphate.

The protein belongs to the class-IV pyridoxal-phosphate-dependent aminotransferase family. Pyridoxal 5'-phosphate serves as cofactor.

Its pathway is secondary metabolite biosynthesis. Aminotransferase; part of the gene cluster that mediates the biosynthesis of aspercryptins, linear lipopeptides built from six amino acids including 2 highly unusual and nonproteogenic amino acids, 2-amino-octanoic acid (2aoa) and 2-amino-dodecanol (2adol). The core structure of aspercryptins is as follows: Ser/Ala-Thr-Ile/Val-2aoa-Asn-2adol. The first step of aspercryptin biosynthesis is the generation of the fatty acid precursors, octanoic and dodecanoic acids, by the FAS subunits atnF and atnM. The fatty acid precursors are likely transformed into the corresponding alpha-amino fatty acids in three steps. First, they are hydroxylated by the cytochrome P450 monooxygenase atnE, then oxidized to the corresponding alpha-keto acids by the NAD(P)-dependent oxidoreductase atnD, and finally converted to the alpha-amino fatty acids by the PLP-dependent aminotransferases atnH or atnJ. the alpha-amino fatty acids, 2-amino-octanoic and 2-amino-dodecanoic acids, are recognized, activated, and covalently tethered to the NRPS atnA by its fourth and sixth adenylation domains. The second module of atnA is the Thr module and contains an epimerase (E) domain responsible for the epimerization of Thr to D-allo-Thr. Additionally, despite atnA having only one epimerase domain, the first amino acid of aspercryptin A1 is D-Ser, suggesting that serine is either loaded directly as D-Ser on the first module or that the epimerase domain in the threonine module epimerizes both L-Ser and L-Thr. After condensation of the hexapeptide of aspercryptin, the C-terminal reductase (TE) domain might be involved in the reductive release and production of the aldehyde hexapeptide. Further reduction would generate aspercryptins. The variety of aspercryptins produced reflects the flexibility of the atnA NRPS, allowing incorporation of alanine instead of serine, valine for isoleucine, and a C10 fatty amino alcohol instead of the C12 version. AtnB seems to be involved in the selectivity for Ile versus Val by the third module. Moreover, type B, C and D aspercryptins have an additional N-terminal cichorine, acetyl and propionyl group respectively. This Emericella nidulans (strain FGSC A4 / ATCC 38163 / CBS 112.46 / NRRL 194 / M139) (Aspergillus nidulans) protein is Aminotransferase atnJ.